The primary structure comprises 297 residues: Homoserine kinase (297 aa).

Position 85 to 95 (85 to 95) interacts with ATP; that stretch reads PPTRGMGSSSA.

This sequence belongs to the GHMP kinase family. Homoserine kinase subfamily.

Its subcellular location is the cytoplasm. It catalyses the reaction L-homoserine + ATP = O-phospho-L-homoserine + ADP + H(+). It participates in amino-acid biosynthesis; L-threonine biosynthesis; L-threonine from L-aspartate: step 4/5. Functionally, catalyzes the ATP-dependent phosphorylation of L-homoserine to L-homoserine phosphate. This chain is Homoserine kinase, found in Desulfitobacterium hafniense (strain DSM 10664 / DCB-2).